A 315-amino-acid polypeptide reads, in one-letter code: Ribose-phosphate pyrophosphokinase (315 aa).

ATP-binding positions include 37–39 (DGE) and 96–97 (RQ). Mg(2+) contacts are provided by histidine 131 and aspartate 170. Residue lysine 194 is part of the active site. Residues arginine 196, aspartate 220, and 224–228 (DTGGT) contribute to the D-ribose 5-phosphate site.

Belongs to the ribose-phosphate pyrophosphokinase family. Class I subfamily. Homohexamer. Requires Mg(2+) as cofactor.

The protein localises to the cytoplasm. It carries out the reaction D-ribose 5-phosphate + ATP = 5-phospho-alpha-D-ribose 1-diphosphate + AMP + H(+). Its pathway is metabolic intermediate biosynthesis; 5-phospho-alpha-D-ribose 1-diphosphate biosynthesis; 5-phospho-alpha-D-ribose 1-diphosphate from D-ribose 5-phosphate (route I): step 1/1. In terms of biological role, involved in the biosynthesis of the central metabolite phospho-alpha-D-ribosyl-1-pyrophosphate (PRPP) via the transfer of pyrophosphoryl group from ATP to 1-hydroxyl of ribose-5-phosphate (Rib-5-P). In Escherichia coli O6:H1 (strain CFT073 / ATCC 700928 / UPEC), this protein is Ribose-phosphate pyrophosphokinase.